Here is a 78-residue protein sequence, read N- to C-terminus: Exodeoxyribonuclease 7 small subunit (78 aa).

This sequence belongs to the XseB family. Heterooligomer composed of large and small subunits.

Its subcellular location is the cytoplasm. The enzyme catalyses Exonucleolytic cleavage in either 5'- to 3'- or 3'- to 5'-direction to yield nucleoside 5'-phosphates.. Functionally, bidirectionally degrades single-stranded DNA into large acid-insoluble oligonucleotides, which are then degraded further into small acid-soluble oligonucleotides. The sequence is that of Exodeoxyribonuclease 7 small subunit from Oceanobacillus iheyensis (strain DSM 14371 / CIP 107618 / JCM 11309 / KCTC 3954 / HTE831).